A 476-amino-acid polypeptide reads, in one-letter code: Protein transport protein Sec61 subunit alpha (476 aa).

Over 2–33 (GIKFLEFIKPFCAVLPEIQKPERKIQFREKVL) the chain is Cytoplasmic. The helical transmembrane segment at 34–53 (WTAITLFIFLVCCQIPLFGI) threads the bilayer. The Lumenal segment spans residues 54-76 (MSSDSADPFYWMRVILASNRGTL). The chain crosses the membrane as a helical span at residues 77 to 96 (MELGIAPIVTSGLIMQLLAG). Residues 97 to 117 (AKIIEVGDTPKDRALFNGAQK) lie on the Cytoplasmic side of the membrane. Residues 118–138 (LFGMIITIGQAIVYVMTGMYG) form a helical membrane-spanning segment. Over 139-144 (DPSEMG) the chain is Lumenal. A helical transmembrane segment spans residues 145–165 (AGICLLIIIQLFVAGLIVLLL). Residues 166 to 172 (DELLQKG) are Cytoplasmic-facing. A helical transmembrane segment spans residues 173 to 193 (YGLGSGISLFIATNICETIVW). Over 194–240 (KAFGPTTVNTGRGTEFEGAIIALFHLLATRTDKVRALREAFYRQNLP) the chain is Lumenal. The helical transmembrane segment at 241–261 (NLMNLIATVFVFAVVIYFQGF) threads the bilayer. Residues 262-288 (RVDLPIKSARYRGQYNTYPIKLFYTSN) lie on the Cytoplasmic side of the membrane. A helical membrane pass occupies residues 289-309 (IPIILQSALVSNLYVISQMLS). Residues 310-354 (TRFSGNFLVNLLGTWSDATTSGPARAYPVAGLCYYLSPPESFGSV) are Lumenal-facing. The chain crosses the membrane as a helical span at residues 355 to 375 (LDDPVHAVIYIVFMLGSCAFF). Topologically, residues 376–420 (SKTWIEVSGSSAKDVAKQLKEQQMVMRGHRETSMVHELNRYIPTA) are cytoplasmic. The chain crosses the membrane as a helical span at residues 421-441 (AAFGGLCIGGLSVMADFLGAI). At 442-445 (GSGT) the chain is on the lumenal side. A helical membrane pass occupies residues 446 to 462 (GILLAVTIIYQYFEIFV). At 463 to 476 (KEQSEVGSMGALLF) the chain is on the cytoplasmic side.

It belongs to the SecY/SEC61-alpha family. The SEC61 channel-forming translocon complex consists of channel-forming core components SEC61A1, SEC61B and SEC61G and different auxiliary components such as SEC62 and SEC63. The SEC61 channel associates with the multi-pass translocon (MPT) complex.

It localises to the endoplasmic reticulum membrane. In terms of biological role, component of SEC61 channel-forming translocon complex that mediates transport of signal peptide-containing precursor polypeptides across the endoplasmic reticulum (ER). Forms a ribosome receptor and a gated pore in the ER membrane, both functions required for cotranslational translocation of nascent polypeptides. May cooperate with auxiliary protein SEC62, SEC63 and HSPA5/BiP to enable post-translational transport of small presecretory proteins. The SEC61 channel is also involved in ER membrane insertion of transmembrane proteins: it mediates membrane insertion of the first few transmembrane segments of proteins, while insertion of subsequent transmembrane regions of multi-pass membrane proteins is mediated by the multi-pass translocon (MPT) complex. This Bovichtus variegatus (Thornfish) protein is Protein transport protein Sec61 subunit alpha (sec61a).